A 201-amino-acid polypeptide reads, in one-letter code: LexA repressor (201 aa).

A DNA-binding region (H-T-H motif) is located at residues 28-48 (MRDIAAHLRISGTLGVSKHLT). Catalysis depends on for autocatalytic cleavage activity residues S120 and K157.

This sequence belongs to the peptidase S24 family. As to quaternary structure, homodimer.

It carries out the reaction Hydrolysis of Ala-|-Gly bond in repressor LexA.. Functionally, represses a number of genes involved in the response to DNA damage (SOS response), including recA and lexA. In the presence of single-stranded DNA, RecA interacts with LexA causing an autocatalytic cleavage which disrupts the DNA-binding part of LexA, leading to derepression of the SOS regulon and eventually DNA repair. In Geobacter metallireducens (strain ATCC 53774 / DSM 7210 / GS-15), this protein is LexA repressor.